The chain runs to 180 residues: Ribosome-recycling factor (180 aa).

The segment at 135–156 is disordered; the sequence is SDLKKDNDLSEDSRHRTEDDIQ.

This sequence belongs to the RRF family.

It is found in the cytoplasm. Its function is as follows. Responsible for the release of ribosomes from messenger RNA at the termination of protein biosynthesis. May increase the efficiency of translation by recycling ribosomes from one round of translation to another. The polypeptide is Ribosome-recycling factor (Oenococcus oeni (strain ATCC BAA-331 / PSU-1)).